A 262-amino-acid chain; its full sequence is Small ribosomal subunit protein mS23 (262 aa).

The segment covering 242–254 (AAEEQETSLDDDA) has biased composition (acidic residues). The disordered stretch occupies residues 242–262 (AAEEQETSLDDDATEKVAVAA).

The protein belongs to the mitochondrion-specific ribosomal protein mS23 family. Component of the mitochondrial small ribosomal subunit.

It is found in the mitochondrion. The protein is Small ribosomal subunit protein mS23 (rsm25) of Aspergillus niger (strain ATCC MYA-4892 / CBS 513.88 / FGSC A1513).